Reading from the N-terminus, the 431-residue chain is Enolase (431 aa).

Position 167 (Gln-167) interacts with (2R)-2-phosphoglycerate. Catalysis depends on Glu-209, which acts as the Proton donor. Residues Asp-246, Glu-290, and Asp-317 each coordinate Mg(2+). Residues Lys-342, Arg-371, Ser-372, and Lys-393 each contribute to the (2R)-2-phosphoglycerate site. The active-site Proton acceptor is Lys-342.

Belongs to the enolase family. Component of the RNA degradosome, a multiprotein complex involved in RNA processing and mRNA degradation. The cofactor is Mg(2+).

It localises to the cytoplasm. The protein localises to the secreted. It is found in the cell surface. The catalysed reaction is (2R)-2-phosphoglycerate = phosphoenolpyruvate + H2O. The protein operates within carbohydrate degradation; glycolysis; pyruvate from D-glyceraldehyde 3-phosphate: step 4/5. Its function is as follows. Catalyzes the reversible conversion of 2-phosphoglycerate (2-PG) into phosphoenolpyruvate (PEP). It is essential for the degradation of carbohydrates via glycolysis. This chain is Enolase, found in Yersinia pseudotuberculosis serotype O:1b (strain IP 31758).